We begin with the raw amino-acid sequence, 311 residues long: tRNA (guanine-N(7)-)-methyltransferase (311 aa).

S-adenosyl-L-methionine-binding residues include E28, E53, and D103. Residue D103 is part of the active site. Positions 107 and 139 each coordinate substrate.

It belongs to the class I-like SAM-binding methyltransferase superfamily. TrmB family.

It catalyses the reaction guanosine(46) in tRNA + S-adenosyl-L-methionine = N(7)-methylguanosine(46) in tRNA + S-adenosyl-L-homocysteine. It functions in the pathway tRNA modification; N(7)-methylguanine-tRNA biosynthesis. Functionally, catalyzes the formation of N(7)-methylguanine at position 46 (m7G46) in tRNA. The protein is tRNA (guanine-N(7)-)-methyltransferase of Thermus thermophilus (strain ATCC BAA-163 / DSM 7039 / HB27).